The chain runs to 1004 residues: Phyllocladan-16-alpha-ol synthase (1004 aa).

The DXDD motif signature appears at 321–324 (DADD). Positions 667, 671, 872, 873, 876, and 880 each coordinate Mg(2+). A DEXXE motif motif is present at residues 667–671 (DEFME).

Belongs to the terpene synthase family. It depends on Mg(2+) as a cofactor.

It carries out the reaction (2E,6E,10E)-geranylgeranyl diphosphate = (+)-copalyl diphosphate. The enzyme catalyses (+)-copalyl diphosphate + H2O = phyllocladan-16alpha-ol + diphosphate. Functionally, involved in the synthesis of labdane-related hydrocarbons by catalyzing the conversion of geranylgeranyl diphosphate (GGDP) to phyllocladan-16-alpha-ol in a two step via type B cyclization into a (+)-copalyl diphosphate ((+)-CDP) intermediate. The polypeptide is Phyllocladan-16-alpha-ol synthase (PaDC1) (Phomopsis amygdali (Fusicoccum amygdali)).